Consider the following 276-residue polypeptide: uncharacterized protein (276 aa).

This is an uncharacterized protein from Methanocaldococcus jannaschii (strain ATCC 43067 / DSM 2661 / JAL-1 / JCM 10045 / NBRC 100440) (Methanococcus jannaschii).